The chain runs to 119 residues: Large ribosomal subunit protein uL22 (119 aa).

This sequence belongs to the universal ribosomal protein uL22 family. As to quaternary structure, part of the 50S ribosomal subunit.

This protein binds specifically to 23S rRNA; its binding is stimulated by other ribosomal proteins, e.g. L4, L17, and L20. It is important during the early stages of 50S assembly. It makes multiple contacts with different domains of the 23S rRNA in the assembled 50S subunit and ribosome. In terms of biological role, the globular domain of the protein is located near the polypeptide exit tunnel on the outside of the subunit, while an extended beta-hairpin is found that lines the wall of the exit tunnel in the center of the 70S ribosome. This Tropheryma whipplei (strain TW08/27) (Whipple's bacillus) protein is Large ribosomal subunit protein uL22.